Here is a 179-residue protein sequence, read N- to C-terminus: Large ribosomal subunit protein uL5 (179 aa).

The protein belongs to the universal ribosomal protein uL5 family. In terms of assembly, part of the 50S ribosomal subunit; part of the 5S rRNA/L5/L18/L25 subcomplex. Contacts the 5S rRNA and the P site tRNA. Forms a bridge to the 30S subunit in the 70S ribosome.

Functionally, this is one of the proteins that bind and probably mediate the attachment of the 5S RNA into the large ribosomal subunit, where it forms part of the central protuberance. In the 70S ribosome it contacts protein S13 of the 30S subunit (bridge B1b), connecting the 2 subunits; this bridge is implicated in subunit movement. Contacts the P site tRNA; the 5S rRNA and some of its associated proteins might help stabilize positioning of ribosome-bound tRNAs. The sequence is that of Large ribosomal subunit protein uL5 from Burkholderia ambifaria (strain MC40-6).